The following is an 89-amino-acid chain: MSVDAETKTKIIKDNARDKNDTGSPEVQVAILTTRIKNLTEHFKDHHKDNHSRRGLLQMVNKRRSLLAYLKKKDVERYNALIQKLGLRK.

Positions 1–21 are enriched in basic and acidic residues; it reads MSVDAETKTKIIKDNARDKND. The tract at residues 1–26 is disordered; sequence MSVDAETKTKIIKDNARDKNDTGSPE.

It belongs to the universal ribosomal protein uS15 family. Part of the 30S ribosomal subunit. Forms a bridge to the 50S subunit in the 70S ribosome, contacting the 23S rRNA.

In terms of biological role, one of the primary rRNA binding proteins, it binds directly to 16S rRNA where it helps nucleate assembly of the platform of the 30S subunit by binding and bridging several RNA helices of the 16S rRNA. Functionally, forms an intersubunit bridge (bridge B4) with the 23S rRNA of the 50S subunit in the ribosome. The sequence is that of Small ribosomal subunit protein uS15 from Erythrobacter litoralis (strain HTCC2594).